We begin with the raw amino-acid sequence, 152 residues long: Flagellar assembly factor FliW (152 aa).

This sequence belongs to the FliW family. Interacts with translational regulator CsrA and flagellin(s).

The protein localises to the cytoplasm. In terms of biological role, acts as an anti-CsrA protein, binds CsrA and prevents it from repressing translation of its target genes, one of which is flagellin. Binds to flagellin and participates in the assembly of the flagellum. The polypeptide is Flagellar assembly factor FliW (Caldicellulosiruptor bescii (strain ATCC BAA-1888 / DSM 6725 / KCTC 15123 / Z-1320) (Anaerocellum thermophilum)).